The sequence spans 374 residues: Histidine biosynthesis bifunctional protein HisB (374 aa).

The histidinol-phosphatase stretch occupies residues Met1–Glu183. Residue Asp9 is the Nucleophile of the active site. 3 residues coordinate Mg(2+): Asp9, Asp11, and Asp131. Catalysis depends on Asp11, which acts as the Proton donor. The interval Arg184 to Leu374 is imidazoleglycerol-phosphate dehydratase.

The protein in the N-terminal section; belongs to the histidinol-phosphatase family. In the C-terminal section; belongs to the imidazoleglycerol-phosphate dehydratase family. It depends on Mg(2+) as a cofactor.

It localises to the cytoplasm. It catalyses the reaction D-erythro-1-(imidazol-4-yl)glycerol 3-phosphate = 3-(imidazol-4-yl)-2-oxopropyl phosphate + H2O. The catalysed reaction is L-histidinol phosphate + H2O = L-histidinol + phosphate. The protein operates within amino-acid biosynthesis; L-histidine biosynthesis; L-histidine from 5-phospho-alpha-D-ribose 1-diphosphate: step 6/9. It functions in the pathway amino-acid biosynthesis; L-histidine biosynthesis; L-histidine from 5-phospho-alpha-D-ribose 1-diphosphate: step 8/9. This is Histidine biosynthesis bifunctional protein HisB from Bacteroides fragilis (strain ATCC 25285 / DSM 2151 / CCUG 4856 / JCM 11019 / LMG 10263 / NCTC 9343 / Onslow / VPI 2553 / EN-2).